Here is a 315-residue protein sequence, read N- to C-terminus: Endolytic peptidoglycan transglycosylase RlpA (315 aa).

Positions 1–19 are cleaved as a signal peptide; sequence MGLALEKVCFLGVIFLISA. Cys-20 is lipidated: N-palmitoyl cysteine. The S-diacylglycerol cysteine moiety is linked to residue Cys-20. Residues 68 to 79 show a composition bias toward basic and acidic residues; the sequence is SDSQDSNTKDQP. The interval 68–92 is disordered; the sequence is SDSQDSNTKDQPLDNGMRDSSSIQR. The SPOR domain occupies 242–315; that stretch reads SVSGGKFSLQ…YNQNAVLTRE (74 aa).

Belongs to the RlpA family.

Its subcellular location is the cell membrane. Functionally, lytic transglycosylase with a strong preference for naked glycan strands that lack stem peptides. The protein is Endolytic peptidoglycan transglycosylase RlpA of Helicobacter pylori (strain ATCC 700392 / 26695) (Campylobacter pylori).